The chain runs to 227 residues: E3 ubiquitin-protein ligase ZNRF1 (227 aa).

Positions 1-42 (MGGKQSTAARSRGPFPGVSTDDSAVPPPGGAPHFGHYRTGGG) are disordered. The N-myristoyl glycine moiety is linked to residue Gly-2. Positions 2–10 (GGKQSTAAR) are required for endosomal and lysosomal localization and myristoylation. Residues Ser-50, Ser-52, and Ser-53 each carry the phosphoserine modification. Positions 68-105 (PFGLYTPASRGTGDSERAPGGGGSASDSTYAHGNGYQE) are disordered. Phosphotyrosine; by SRC is present on Tyr-103. At Ser-123 the chain carries Phosphoserine. The RING-type; atypical zinc finger occupies 184-225 (CVICLEELLQGDTIARLPCLCIYHKSCIDSWFEVNRSCPEHP).

Interacts with AKT1, GLUL and TUBB2A. Interacts with ZNRF2. Interacts (via its RING domain) with UBE2N. Interacts (when phosphorylated) with YWHAE. Post-translationally, N-myristoylation targets ZNRF1 to intracellular membranes. In terms of processing, phosphorylated by SRC at Tyr-103; leading to 'Lys-63'-linked ubiquitination of TLR3, lysosomal trafficking and degradation. As to expression, expressed primarily in the nervous system, with expression higher in developing brain relative to adult. Expressed at low levels in testis and thymus.

It is found in the endosome. It localises to the lysosome. The protein resides in the membrane. Its subcellular location is the cytoplasmic vesicle. The protein localises to the secretory vesicle. It is found in the synaptic vesicle membrane. The enzyme catalyses S-ubiquitinyl-[E2 ubiquitin-conjugating enzyme]-L-cysteine + [acceptor protein]-L-lysine = [E2 ubiquitin-conjugating enzyme]-L-cysteine + N(6)-ubiquitinyl-[acceptor protein]-L-lysine.. The protein operates within protein modification; protein ubiquitination. E3 ubiquitin-protein ligase that plays a role in different processes including cell differentiation, receptor recycling or regulation of inflammation. Mediates the ubiquitination of AKT1 and GLUL, thereby playing a role in neuron cells differentiation. Plays a role in the establishment and maintenance of neuronal transmission and plasticity. Regulates Schwann cells differentiation by mediating ubiquitination of GLUL. Promotes neurodegeneration by mediating 'Lys-48'-linked polyubiquitination and subsequent degradation of AKT1 in axons: degradation of AKT1 prevents AKT1-mediated phosphorylation of GSK3B, leading to GSK3B activation and phosphorylation of DPYSL2/CRMP2 followed by destabilization of microtubule assembly in axons. Ubiquitinates the Na(+)/K(+) ATPase alpha-1 subunit/ATP1A1 and thereby influences its endocytosis and/or degradation. Controls ligand-induced EGFR signaling via mediating receptor ubiquitination and recruitment of the ESCRT machinery. Acts as a negative feedback mechanism controlling TLR3 trafficking by mediating TLR3 'Lys-63'-linked polyubiquitination to reduce type I IFN production. Modulates inflammation by promoting caveolin-1/CAV1 ubiquitination and degradation to regulate TLR4-activated immune response. This is E3 ubiquitin-protein ligase ZNRF1 (ZNRF1) from Homo sapiens (Human).